The following is a 545-amino-acid chain: MTTRYIFVTGGVVSSLGKGIAAASLAAILEARGLNVTIMKLDPYINVDPGTMSPTQHGEVFVTEDGAETDLDLGHYERFIRTKMNRRNNFTTGRIYEEVISKERRGDYLGATIQVIPHITNAIKEKVLAGGEGHDVAIVEIGGTVGDIESLPFLESIRQLGSELGRERTLFMHLTLVPFLGAAGEIKTKPTQHSVKELRSIGIAPDVLVCRGDRAIPANEKAKISLFCNVEERAVISLKDVDSIYKIPALLRSQGLDDLVIKRFNLTCNEADLSEWENVIYQEANPNGEVTIGMVGKYIELPDAYKSVNEALKHAGLKNRVTVNIKYIDSQTVEAKGEEVLQGLDGILVPGGFGERGVEGKIFAAKFARENNLPYFGICLGMQVALIEFARHVAGLEGAHSTEFNPQTPYPVVGLITEWINEEGDVETRHESSDLGGTMRLGAQLCHLKEGTKAAVAYDSATCVERHRHRYEVNNNYIDRLEKAGLVFSGLSSDRKLIEMIELPNHPWFVASQFHPEFTSTPRDGHALFEGFIAASYAYQKRDID.

Residues 1-266 are amidoligase domain; the sequence is MTTRYIFVTG…DDLVIKRFNL (266 aa). Ser-14 lines the CTP pocket. UTP is bound at residue Ser-14. Residues 15 to 20 and Asp-72 each bind ATP; that span reads SLGKGI. 2 residues coordinate Mg(2+): Asp-72 and Glu-140. CTP is bound by residues 147–149, 187–192, and Lys-223; these read DIE and KTKPTQ. UTP is bound by residues 187–192 and Lys-223; that span reads KTKPTQ. Residue 239 to 241 coordinates ATP; that stretch reads KDV. The Glutamine amidotransferase type-1 domain maps to 291-542; sequence TIGMVGKYIE…IAASYAYQKR (252 aa). Gly-352 contributes to the L-glutamine binding site. Cys-379 functions as the Nucleophile; for glutamine hydrolysis in the catalytic mechanism. L-glutamine is bound by residues 380–383, Glu-403, and Arg-470; that span reads LGMQ. Active-site residues include His-515 and Glu-517.

It belongs to the CTP synthase family. In terms of assembly, homotetramer.

It catalyses the reaction UTP + L-glutamine + ATP + H2O = CTP + L-glutamate + ADP + phosphate + 2 H(+). It carries out the reaction L-glutamine + H2O = L-glutamate + NH4(+). The catalysed reaction is UTP + NH4(+) + ATP = CTP + ADP + phosphate + 2 H(+). The protein operates within pyrimidine metabolism; CTP biosynthesis via de novo pathway; CTP from UDP: step 2/2. With respect to regulation, allosterically activated by GTP, when glutamine is the substrate; GTP has no effect on the reaction when ammonia is the substrate. The allosteric effector GTP functions by stabilizing the protein conformation that binds the tetrahedral intermediate(s) formed during glutamine hydrolysis. Inhibited by the product CTP, via allosteric rather than competitive inhibition. Catalyzes the ATP-dependent amination of UTP to CTP with either L-glutamine or ammonia as the source of nitrogen. Regulates intracellular CTP levels through interactions with the four ribonucleotide triphosphates. The chain is CTP synthase from Shewanella frigidimarina (strain NCIMB 400).